Consider the following 249-residue polypeptide: Cytoplasmic envelopment protein 1 (249 aa).

The protein belongs to the herpesviridae cytoplasmic envelopment protein 1 family.

The protein localises to the virion. It is found in the virion tegument. Its subcellular location is the host cytoplasm. It localises to the host Golgi apparatus. In terms of biological role, plays a critical role in cytoplasmic virus egress. Participates in the final step of tegumentation and envelope acquisition within the host cytoplasm. In Homo sapiens (Human), this protein is Cytoplasmic envelopment protein 1 (UL103).